The following is a 345-amino-acid chain: KRR1 small subunit processome component homolog (345 aa).

A KH domain is found at aspartate 125–asparagine 193. Positions asparagine 232–lysine 245 are enriched in basic residues. Disordered stretches follow at residues asparagine 232–valine 260 and glutamine 273–serine 345. A coiled-coil region spans residues phenylalanine 270–arginine 298. Basic and acidic residues-rich tracts occupy residues lysine 276–aspartate 302 and arginine 315–alanine 330. Residues leucine 331–serine 345 are compositionally biased toward basic residues.

It belongs to the KRR1 family. In terms of assembly, monomer. Component of the ribosomal small subunit (SSU) processome.

Its subcellular location is the nucleus. The protein resides in the nucleolus. Functionally, required for 40S ribosome biogenesis. Involved in nucleolar processing of pre-18S ribosomal RNA and ribosome assembly. Binds to RNA. Required for female germline development, cell viability during eye development and for survival of dividing cells and epithelial cells during early wing disk development. The polypeptide is KRR1 small subunit processome component homolog (dbe) (Drosophila melanogaster (Fruit fly)).